Here is a 542-residue protein sequence, read N- to C-terminus: Phosphoenolpyruvate carboxykinase (ATP) (542 aa).

The substrate site is built by arginine 67, tyrosine 208, and lysine 214. Residues lysine 214, histidine 233, and 249–257 (GLSGTGKTT) each bind ATP. The Mn(2+) site is built by lysine 214 and histidine 233. Aspartate 270 is a binding site for Mn(2+). Residues glutamate 298, arginine 334, 450-451 (RI), and threonine 456 contribute to the ATP site. Arginine 334 contacts substrate.

This sequence belongs to the phosphoenolpyruvate carboxykinase (ATP) family. In terms of assembly, monomer. The cofactor is Mn(2+).

The protein localises to the cytoplasm. The catalysed reaction is oxaloacetate + ATP = phosphoenolpyruvate + ADP + CO2. It participates in carbohydrate biosynthesis; gluconeogenesis. Functionally, involved in the gluconeogenesis. Catalyzes the conversion of oxaloacetate (OAA) to phosphoenolpyruvate (PEP) through direct phosphoryl transfer between the nucleoside triphosphate and OAA. The polypeptide is Phosphoenolpyruvate carboxykinase (ATP) (Vibrio vulnificus (strain YJ016)).